We begin with the raw amino-acid sequence, 194 residues long: Probable molybdenum cofactor guanylyltransferase (194 aa).

GTP contacts are provided by residues 8-10 (LAG), lysine 20, and aspartate 99. Residue aspartate 99 participates in Mg(2+) binding.

It belongs to the MobA family. Mg(2+) is required as a cofactor.

It is found in the cytoplasm. The catalysed reaction is Mo-molybdopterin + GTP + H(+) = Mo-molybdopterin guanine dinucleotide + diphosphate. In terms of biological role, transfers a GMP moiety from GTP to Mo-molybdopterin (Mo-MPT) cofactor (Moco or molybdenum cofactor) to form Mo-molybdopterin guanine dinucleotide (Mo-MGD) cofactor. This is Probable molybdenum cofactor guanylyltransferase from Synechococcus elongatus (strain ATCC 33912 / PCC 7942 / FACHB-805) (Anacystis nidulans R2).